The sequence spans 491 residues: Anthranilate synthase component 1 (491 aa).

Residues serine 49 and 271-273 (PYL) contribute to the L-tryptophan site. Residue 306–307 (GT) participates in chorismate binding. Glutamate 333 lines the Mg(2+) pocket. Chorismate is bound by residues tyrosine 421, arginine 441, 455–457 (GAG), and glycine 457. Residue glutamate 470 coordinates Mg(2+).

Belongs to the anthranilate synthase component I family. Heterotetramer consisting of two non-identical subunits: a beta subunit (TrpG) and a large alpha subunit (TrpE). Requires Mg(2+) as cofactor.

The enzyme catalyses chorismate + L-glutamine = anthranilate + pyruvate + L-glutamate + H(+). The protein operates within amino-acid biosynthesis; L-tryptophan biosynthesis; L-tryptophan from chorismate: step 1/5. Its activity is regulated as follows. Feedback inhibited by tryptophan. Functionally, part of a heterotetrameric complex that catalyzes the two-step biosynthesis of anthranilate, an intermediate in the biosynthesis of L-tryptophan. In the first step, the glutamine-binding beta subunit (TrpG) of anthranilate synthase (AS) provides the glutamine amidotransferase activity which generates ammonia as a substrate that, along with chorismate, is used in the second step, catalyzed by the large alpha subunit of AS (TrpE) to produce anthranilate. In the absence of TrpG, TrpE can synthesize anthranilate directly from chorismate and high concentrations of ammonia. This chain is Anthranilate synthase component 1 (trpE), found in Neisseria gonorrhoeae (strain ATCC 700825 / FA 1090).